Here is a 90-residue protein sequence, read N- to C-terminus: Probable Fe(2+)-trafficking protein (90 aa).

Belongs to the Fe(2+)-trafficking protein family.

Functionally, could be a mediator in iron transactions between iron acquisition and iron-requiring processes, such as synthesis and/or repair of Fe-S clusters in biosynthetic enzymes. This Nitrosomonas eutropha (strain DSM 101675 / C91 / Nm57) protein is Probable Fe(2+)-trafficking protein.